The following is a 78-amino-acid chain: Defensin-like protein 281 (78 aa).

Positions methionine 1–glycine 23 are cleaved as a signal peptide. 3 cysteine pairs are disulfide-bonded: cysteine 37-cysteine 60, cysteine 46-cysteine 72, and cysteine 50-cysteine 74.

The protein belongs to the DEFL family.

The protein resides in the secreted. In Arabidopsis thaliana (Mouse-ear cress), this protein is Defensin-like protein 281.